Here is a 349-residue protein sequence, read N- to C-terminus: MIINSLKRFGITTGAAASAAAKAAVIGLLNKEKRSTVVIPTPIGLRLEIPVEKVEIDSEISCAEVKKFSGDNPDILDGLVIRCCAKLNENNEIVIIGERGVGKVTRSGLKATMGEMAISPTVREMIINAIREVTDKGIQITIEVPNGETIAEKTLNKMVGIVGGISILGTTGIETPVSDDDYLEHIRCELNVIRQSYDYVVIAPGNSAAKYAAELFDSNCIIKVGDRIGDSIKLASNLFKKVILAGLPAKLLKVYAGIFNTHYSQGDARLESLTHASVLAGLPYGTLTKISNALSVEEAFTYMTKEQRRKVMNIVAEKILSRIKSFNDNINFCVIIFDYDGESLSRVGC.

This sequence belongs to the CbiD family.

It catalyses the reaction Co-precorrin-5B + S-adenosyl-L-methionine = Co-precorrin-6A + S-adenosyl-L-homocysteine. The protein operates within cofactor biosynthesis; adenosylcobalamin biosynthesis; cob(II)yrinate a,c-diamide from sirohydrochlorin (anaerobic route): step 6/10. Its function is as follows. Catalyzes the methylation of C-1 in cobalt-precorrin-5B to form cobalt-precorrin-6A. This is Cobalt-precorrin-5B C(1)-methyltransferase from Saccharolobus solfataricus (strain ATCC 35092 / DSM 1617 / JCM 11322 / P2) (Sulfolobus solfataricus).